Here is a 216-residue protein sequence, read N- to C-terminus: DNA repair and recombination protein RadB (216 aa).

This sequence belongs to the eukaryotic RecA-like protein family. RadB subfamily.

Functionally, involved in DNA repair and in homologous recombination. May regulate the cleavage reactions of the branch-structured DNA. Has a very weak ATPase activity that is not stimulated by DNA. Binds DNA but does not promote DNA strands exchange. The protein is DNA repair and recombination protein RadB of Methanococcus maripaludis (strain C5 / ATCC BAA-1333).